Here is a 62-residue protein sequence, read N- to C-terminus: Photosystem II reaction center protein H (62 aa).

A helical transmembrane segment spans residues 30–50 (PVMAGIGFMLLIFLVTILQIY).

The protein belongs to the PsbH family. In terms of assembly, PSII is composed of 1 copy each of membrane proteins PsbA, PsbB, PsbC, PsbD, PsbE, PsbF, PsbH, PsbI, PsbJ, PsbK, PsbL, PsbM, PsbT, PsbX, PsbY, Psb30/Ycf12, peripheral proteins PsbO, CyanoQ (PsbQ), PsbU, PsbV and a large number of cofactors. It forms dimeric complexes.

Its subcellular location is the cellular thylakoid membrane. One of the components of the core complex of photosystem II (PSII), required for its stability and/or assembly. PSII is a light-driven water:plastoquinone oxidoreductase that uses light energy to abstract electrons from H(2)O, generating O(2) and a proton gradient subsequently used for ATP formation. It consists of a core antenna complex that captures photons, and an electron transfer chain that converts photonic excitation into a charge separation. This is Photosystem II reaction center protein H from Prochlorococcus marinus (strain MIT 9303).